A 405-amino-acid chain; its full sequence is NADH-quinone oxidoreductase subunit D (405 aa).

Belongs to the complex I 49 kDa subunit family. NDH-1 is composed of 14 different subunits. Subunits NuoB, C, D, E, F, and G constitute the peripheral sector of the complex.

The protein resides in the cell inner membrane. The catalysed reaction is a quinone + NADH + 5 H(+)(in) = a quinol + NAD(+) + 4 H(+)(out). In terms of biological role, NDH-1 shuttles electrons from NADH, via FMN and iron-sulfur (Fe-S) centers, to quinones in the respiratory chain. The immediate electron acceptor for the enzyme in this species is believed to be ubiquinone. Couples the redox reaction to proton translocation (for every two electrons transferred, four hydrogen ions are translocated across the cytoplasmic membrane), and thus conserves the redox energy in a proton gradient. In Ruegeria pomeroyi (strain ATCC 700808 / DSM 15171 / DSS-3) (Silicibacter pomeroyi), this protein is NADH-quinone oxidoreductase subunit D.